The primary structure comprises 1158 residues: Transient receptor potential cation channel subfamily M member 5 (1158 aa).

At 1–729 the chain is on the cytoplasmic side; sequence MQTTQSSCPG…LTRWRKFWGA (729 aa). Ser129 is modified (phosphoserine; by PKC). 4 residues coordinate Ca(2+): Cys341, Asp350, Asp353, and Glu354. Residues 488-507 are disordered; the sequence is GRRMEERGPPKRPAGQKWLP. Residues 552-572 adopt a coiled-coil conformation; the sequence is KIIKEMSHLEKEAEVARTMRE. The helical transmembrane segment at 730 to 754 threads the bilayer; it reads PVTVFLGNVVMYFAFLFLFTYVLLV. Residues 755–764 are Extracellular-facing; it reads DFRPPPQGPS. A helical membrane pass occupies residues 765 to 784; that stretch reads GSEVTLYFWVFTLVLEEIRQ. Glu781 and Gln784 together coordinate Ca(2+). At 785 to 805 the chain is on the cytoplasmic side; sequence GFFTDEDTHLVKKFTLYVEDN. Residues 806 to 824 form a helical membrane-spanning segment; sequence WNKCDMVAIFLFIVGVTCR. Positions 807 and 810 each coordinate Ca(2+). The Extracellular segment spans residues 825–831; sequence MVPSVFE. Residues 832–854 traverse the membrane as a helical segment; that stretch reads AGRTVLAIDFMVFTLRLIHIFAI. The Cytoplasmic segment spans residues 855-863; sequence HKQLGPKII. Residues 864–893 traverse the membrane as a helical segment; sequence IVERMMKDVFFFLFFLSVWLVAYGVTTQAL. The Extracellular portion of the chain corresponds to 894–902; the sequence is LHPHDGRLE. Positions 903–938 form an intramembrane region, pore-forming; sequence WIFRRVLYRPYLQIFGQIPLDEIDEARVNCSLHPLL. Residues 917-919 carry the Selectivity filter motif; sequence FGQ. At 939 to 950 the chain is on the extracellular side; the sequence is LESSASCPNLYA. A helical membrane pass occupies residues 951–985; the sequence is NWLVILLLVTFLLVTNVLLMNLLIAMFSYTFQVVQ. The Cytoplasmic segment spans residues 986–1158; it reads GNADMFWKFQ…LESGLPPSDT (173 aa). Glu1002 lines the Ca(2+) pocket. The span at 1127-1141 shows a compositional bias: polar residues; it reads TYSSSQNCGCRSQPA. Residues 1127–1158 are disordered; sequence TYSSSQNCGCRSQPASARDREYLESGLPPSDT.

It belongs to the transient receptor (TC 1.A.4) family. LTrpC subfamily. TRPM5 sub-subfamily. In terms of assembly, homotetramer. Post-translationally, multiple phosphorylation sites regulate the Gq/ TRPM5 modulation axis, with the Ser-129 playing a substantial role in this positive modulation. In terms of tissue distribution, strongly expressed in liver, heart, testis, brain and kidney. Detected in fetal liver, kidney, spleen, brain, heart and lung, and in adult skin, eyes, spleen, stomach, small intestine, colon, lung, bladder, pancreas and thymus. Biallelically expressed at all stages and tissues examined. Also expressed in subsets of taste receptor cells of the tongue, in olfactory sensory neurons of the main olfactory epithelium and in the vomeronasal organ.

Its subcellular location is the cell membrane. The catalysed reaction is Na(+)(in) = Na(+)(out). The enzyme catalyses K(+)(in) = K(+)(out). Ca(2+)-activated cation channel. Displays voltage dependence modulation. Regulated by PI(4,5)P2 levels. PI(4,5)P 2 reverses the Ca(2+) -induced desensitization of channels. Inhibited by flufenamic acid with an IC(50) of 24.5 uM and spermine with an IC(50) of 37 uM. Is a highly temperature-sensitive, heat activated channel showing a steep increase of inward currents at temperatures between 15 and 35 degrees Celsius. Heat activation is due to a shift of the voltage-dependent activation curve to negative potentials. The channel is blocked by extracellular acidification. Monovalent cation-selective ion channel activated by intracellular Ca(2+) in a voltage- and temperature-dependent manner. Mediates the transport of Na(+), K(+) and Cs(+) ions equally well. Activated directly by increase in intracellular Ca(2+), but is impermeable to it. The activation mechanism of TRPM5 involves a multistep process. TRPM5 activation involves ligand binding (i.e., tastant molecule, glucose stimulation) to Gq/G-protein coupled receptors (GPCR) and leads to the breakdown of phosphatidylinositol bisphosphate (PIP2) into diacylglycerol (DAG) and inositol trisphosphate (IP3), IP3 binds to its receptors in the endoplasmic reticulum and cause Ca(2+) release. Simultaneously with the intracellular Ca(2+) release, DAG activates the protein kinase C (PKC), which phosphorylates the TRPM5 channel. This phosphorylation combined with the bound Ca(2+), leads to a robust inward current allowing the entry of sodium ions (Na+) into the cell. This ion influx depolarizes the cell membrane, generating action potentials that propagate TRPM5 signals. Is a key player in sensing sweet, umami and bitter stimuli. May also be involved in sensing semiochemicals. Involved in insulin secretion by pancreatic beta cells. In Mus musculus (Mouse), this protein is Transient receptor potential cation channel subfamily M member 5.